The chain runs to 198 residues: dITP/XTP pyrophosphatase (198 aa).

10 to 15 contacts substrate; sequence SGSDHK. Mg(2+)-binding residues include E43 and D72. Catalysis depends on D72, which acts as the Proton acceptor. Substrate is bound by residues S73, 154–157, K177, and 182–183; these read FGYD and HR.

The protein belongs to the HAM1 NTPase family. Homodimer. The cofactor is Mg(2+).

The enzyme catalyses XTP + H2O = XMP + diphosphate + H(+). The catalysed reaction is dITP + H2O = dIMP + diphosphate + H(+). It catalyses the reaction ITP + H2O = IMP + diphosphate + H(+). In terms of biological role, pyrophosphatase that catalyzes the hydrolysis of nucleoside triphosphates to their monophosphate derivatives, with a high preference for the non-canonical purine nucleotides XTP (xanthosine triphosphate), dITP (deoxyinosine triphosphate) and ITP. Seems to function as a house-cleaning enzyme that removes non-canonical purine nucleotides from the nucleotide pool, thus preventing their incorporation into DNA/RNA and avoiding chromosomal lesions. This is dITP/XTP pyrophosphatase from Leptospira biflexa serovar Patoc (strain Patoc 1 / Ames).